Consider the following 559-residue polypeptide: Transmembrane E3 ubiquitin-protein ligase FLY2 (559 aa).

An N-terminal signal peptide occupies residues methionine 1–glycine 29. The Lumenal segment spans residues leucine 30 to asparagine 259. The helical transmembrane segment at lysine 260 to isoleucine 280 threads the bilayer. Residues arginine 281–lysine 294 lie on the Cytoplasmic side of the membrane. Residues valine 295–leucine 315 form a helical membrane-spanning segment. Topologically, residues threonine 316–glycine 318 are lumenal. Residues isoleucine 319–phenylalanine 339 form a helical membrane-spanning segment. Residues serine 340–leucine 370 lie on the Cytoplasmic side of the membrane. A helical transmembrane segment spans residues serine 371–phenylalanine 391. At histidine 392 to tyrosine 394 the chain is on the lumenal side. A helical transmembrane segment spans residues methionine 395–valine 415. Over arginine 416–histidine 423 the chain is Cytoplasmic. The helical transmembrane segment at proline 424 to cysteine 444 threads the bilayer. Over proline 445 to cysteine 458 the chain is Lumenal. A helical membrane pass occupies residues valine 459–glycine 479. At serine 480–alanine 559 the chain is on the cytoplasmic side. An RING-type; atypical zinc finger spans residues cysteine 509–arginine 553.

As to expression, highly expressed in stems. Expressed in root xylem and seed coat.

The protein localises to the endomembrane system. The catalysed reaction is S-ubiquitinyl-[E2 ubiquitin-conjugating enzyme]-L-cysteine + [acceptor protein]-L-lysine = [E2 ubiquitin-conjugating enzyme]-L-cysteine + N(6)-ubiquitinyl-[acceptor protein]-L-lysine.. The protein operates within protein modification; protein ubiquitination. E3 ubiquitin-protein ligase that may be involved in xylem development. This is Transmembrane E3 ubiquitin-protein ligase FLY2 from Arabidopsis thaliana (Mouse-ear cress).